The following is a 261-amino-acid chain: 5'-nucleotidase SurE (261 aa).

A divalent metal cation is bound by residues Asp18, Asp19, Ser50, and Asn102.

The protein belongs to the SurE nucleotidase family. A divalent metal cation serves as cofactor.

The protein localises to the cytoplasm. The enzyme catalyses a ribonucleoside 5'-phosphate + H2O = a ribonucleoside + phosphate. Its function is as follows. Nucleotidase that shows phosphatase activity on nucleoside 5'-monophosphates. The polypeptide is 5'-nucleotidase SurE (Rhodospirillum rubrum (strain ATCC 11170 / ATH 1.1.1 / DSM 467 / LMG 4362 / NCIMB 8255 / S1)).